The chain runs to 76 residues: Kappa-scoloptoxin(15)-Ssd3a (76 aa).

The N-terminal stretch at 1–23 (MEGKIIFICFLVVLLTLPELISS) is a signal peptide.

Post-translationally, contains 2 disulfide bonds. In terms of tissue distribution, expressed by the venom gland.

Its subcellular location is the secreted. In terms of biological role, acts as a voltage-gated potassium channel inhibitor. The chain is Kappa-scoloptoxin(15)-Ssd3a from Scolopendra dehaani (Thai centipede).